Consider the following 212-residue polypeptide: Ribosomal RNA small subunit methyltransferase G (212 aa).

S-adenosyl-L-methionine-binding positions include Gly-80, Leu-85, 131-132 (AE), and Arg-146.

The protein belongs to the methyltransferase superfamily. RNA methyltransferase RsmG family.

Its subcellular location is the cytoplasm. It catalyses the reaction guanosine(527) in 16S rRNA + S-adenosyl-L-methionine = N(7)-methylguanosine(527) in 16S rRNA + S-adenosyl-L-homocysteine. Its function is as follows. Specifically methylates the N7 position of guanine in position 527 of 16S rRNA. The protein is Ribosomal RNA small subunit methyltransferase G of Xanthomonas oryzae pv. oryzae (strain KACC10331 / KXO85).